The chain runs to 239 residues: tRNA (guanine-N(7)-)-methyltransferase (239 aa).

S-adenosyl-L-methionine contacts are provided by Glu69, Glu94, Asp121, and Asp144. Asp144 is an active-site residue. Position 148 (Lys148) interacts with substrate. The segment at 150-155 (RHNKRR) is interaction with RNA. Substrate contacts are provided by residues Asp180 and 217-220 (TKFE).

It belongs to the class I-like SAM-binding methyltransferase superfamily. TrmB family. Monomer.

The enzyme catalyses guanosine(46) in tRNA + S-adenosyl-L-methionine = N(7)-methylguanosine(46) in tRNA + S-adenosyl-L-homocysteine. The protein operates within tRNA modification; N(7)-methylguanine-tRNA biosynthesis. In terms of biological role, catalyzes the formation of N(7)-methylguanine at position 46 (m7G46) in tRNA. This Klebsiella pneumoniae subsp. pneumoniae (strain ATCC 700721 / MGH 78578) protein is tRNA (guanine-N(7)-)-methyltransferase.